Consider the following 327-residue polypeptide: Zinc transport protein ZntB (327 aa).

The Cytoplasmic portion of the chain corresponds to 1–273; that stretch reads MEAIKGSDVN…ARRTYTMSLM (273 aa). A helical transmembrane segment spans residues 274–294; the sequence is AMVFLPSTFLTGLFGVNLGGI. The Periplasmic segment spans residues 295-300; the sequence is PGGGWR. A helical membrane pass occupies residues 301–321; it reads FGFSLFCILLVVLIGGVTLWL. Residues 322 to 327 lie on the Cytoplasmic side of the membrane; the sequence is HRSKWL.

The protein belongs to the CorA metal ion transporter (MIT) (TC 1.A.35) family.

Its subcellular location is the cell inner membrane. The enzyme catalyses Zn(2+)(out) + H(+)(out) = Zn(2+)(in) + H(+)(in). Its function is as follows. Zinc transporter. Acts as a Zn(2+):proton symporter, which likely mediates zinc ion uptake. This Salmonella enteritidis PT4 (strain P125109) protein is Zinc transport protein ZntB.